A 500-amino-acid chain; its full sequence is Glycerol kinase (500 aa).

Thr13 contributes to the ADP binding site. 3 residues coordinate ATP: Thr13, Thr14, and Ser15. Thr13 provides a ligand contact to sn-glycerol 3-phosphate. Arg17 is a binding site for ADP. Positions 83, 84, 135, and 244 each coordinate sn-glycerol 3-phosphate. Arg83, Glu84, Tyr135, Asp244, and Gln245 together coordinate glycerol. ADP is bound by residues Thr266 and Gly309. Residues Thr266, Gly309, Gln313, and Gly410 each contribute to the ATP site. Residues Gly410 and Asn414 each coordinate ADP.

Belongs to the FGGY kinase family.

The catalysed reaction is glycerol + ATP = sn-glycerol 3-phosphate + ADP + H(+). It participates in polyol metabolism; glycerol degradation via glycerol kinase pathway; sn-glycerol 3-phosphate from glycerol: step 1/1. Inhibited by fructose 1,6-bisphosphate (FBP). Its function is as follows. Key enzyme in the regulation of glycerol uptake and metabolism. Catalyzes the phosphorylation of glycerol to yield sn-glycerol 3-phosphate. This is Glycerol kinase from Burkholderia cenocepacia (strain HI2424).